A 399-amino-acid chain; its full sequence is MSPPSASRRTREEVDATLQVAKLNATELLPTVHCLSFSSGTGGAATGDFCLLELEPALCQQLEAGDSFVIRGDKDEQAVLCSKDKTYDLKIADTSNMLLFIPGCKTPDQLKEEETPSAIVHTEIFGFSNNYWELRRCRPKLKKLKRLLMENTYEGPDSQKEEDASRSKYTTEDLLNHIQASEEEIMAQLQVLNACEIGGYWRILEFDYEIKLLNHVTQLVDSESWSLDRVPLTVCLQELGPLEPEEMIEHCLKCYGKRYVDKDDVYFELDADKICRVTAEMLLQNAVKFNLAEFQEVWQQSVPEGMTTRLDQLKGLALVDRNSRPEIIFLLKVDDLPEGTQDRFNSLFSLREKWTEEDITPYIQDLCGEKQTIGALLTKYSRSSMQNGIKVYNSRRLIS.

Belongs to the DCC1 family. In terms of assembly, component of the CTF18-RFC complex which consists of CTF8, CTF18, DSCC1 and the RFC complex. Interacts with CTF8 and CTF18. Interacts with DDX11.

The protein localises to the nucleus. Functionally, loads PCNA onto primed templates regulating velocity, spacing and restart activity of replication forks. May couple DNA replication to sister chromatid cohesion through regulation of the acetylation of the cohesin subunit SMC3. In Mus musculus (Mouse), this protein is Sister chromatid cohesion protein DCC1 (DSCC1).